Reading from the N-terminus, the 412-residue chain is 4-hydroxyphenylpyruvate dioxygenase (412 aa).

2 VOC domains span residues 31–179 and 209–369; these read GYDH…LISR and RIDH…LFTK. Fe cation contacts are provided by His-212, His-295, and Glu-380.

The protein belongs to the 4HPPD family. The cofactor is Fe cation.

It carries out the reaction 3-(4-hydroxyphenyl)pyruvate + O2 = homogentisate + CO2. It participates in amino-acid degradation; L-phenylalanine degradation; acetoacetate and fumarate from L-phenylalanine: step 3/6. This chain is 4-hydroxyphenylpyruvate dioxygenase, found in Neurospora crassa (strain ATCC 24698 / 74-OR23-1A / CBS 708.71 / DSM 1257 / FGSC 987).